A 158-amino-acid polypeptide reads, in one-letter code: 6,7-dimethyl-8-ribityllumazine synthase (158 aa).

5-amino-6-(D-ribitylamino)uracil contacts are provided by residues F22, 56–58, and 80–82; these read ALE and VVI. 85–86 contacts (2S)-2-hydroxy-3-oxobutyl phosphate; sequence ET. H88 serves as the catalytic Proton donor. Residue N113 coordinates 5-amino-6-(D-ribitylamino)uracil. R127 provides a ligand contact to (2S)-2-hydroxy-3-oxobutyl phosphate.

The protein belongs to the DMRL synthase family.

It catalyses the reaction (2S)-2-hydroxy-3-oxobutyl phosphate + 5-amino-6-(D-ribitylamino)uracil = 6,7-dimethyl-8-(1-D-ribityl)lumazine + phosphate + 2 H2O + H(+). Its pathway is cofactor biosynthesis; riboflavin biosynthesis; riboflavin from 2-hydroxy-3-oxobutyl phosphate and 5-amino-6-(D-ribitylamino)uracil: step 1/2. Its function is as follows. Catalyzes the formation of 6,7-dimethyl-8-ribityllumazine by condensation of 5-amino-6-(D-ribitylamino)uracil with 3,4-dihydroxy-2-butanone 4-phosphate. This is the penultimate step in the biosynthesis of riboflavin. The chain is 6,7-dimethyl-8-ribityllumazine synthase from Neisseria meningitidis serogroup C / serotype 2a (strain ATCC 700532 / DSM 15464 / FAM18).